The chain runs to 179 residues: ATP-dependent protease subunit HslV (179 aa).

Threonine 7 is a catalytic residue. Positions 162, 165, and 168 each coordinate Na(+).

This sequence belongs to the peptidase T1B family. HslV subfamily. In terms of assembly, a double ring-shaped homohexamer of HslV is capped on each side by a ring-shaped HslU homohexamer. The assembly of the HslU/HslV complex is dependent on binding of ATP.

It localises to the cytoplasm. It carries out the reaction ATP-dependent cleavage of peptide bonds with broad specificity.. Its activity is regulated as follows. Allosterically activated by HslU binding. Protease subunit of a proteasome-like degradation complex believed to be a general protein degrading machinery. The protein is ATP-dependent protease subunit HslV of Nitrosococcus oceani (strain ATCC 19707 / BCRC 17464 / JCM 30415 / NCIMB 11848 / C-107).